We begin with the raw amino-acid sequence, 215 residues long: Protein Thf1 (215 aa).

Positions 182 to 213 (ERMDQAVELVEETIAAEKRKKERRLEEQAQRT) form a coiled coil.

It belongs to the THF1 family.

Its function is as follows. May be involved in photosynthetic membrane biogenesis. The polypeptide is Protein Thf1 (Synechococcus sp. (strain CC9605)).